The primary structure comprises 627 residues: tRNA uridine 5-carboxymethylaminomethyl modification enzyme MnmG (627 aa).

FAD is bound by residues 16–21 (GAGHAG), valine 128, and serine 183. Residue 275–289 (GPRYCPSIEDKVMRF) coordinates NAD(+). An FAD-binding site is contributed by glutamine 372.

This sequence belongs to the MnmG family. As to quaternary structure, homodimer. Heterotetramer of two MnmE and two MnmG subunits. Requires FAD as cofactor.

It localises to the cytoplasm. Functionally, NAD-binding protein involved in the addition of a carboxymethylaminomethyl (cmnm) group at the wobble position (U34) of certain tRNAs, forming tRNA-cmnm(5)s(2)U34. This Geobacter sulfurreducens (strain ATCC 51573 / DSM 12127 / PCA) protein is tRNA uridine 5-carboxymethylaminomethyl modification enzyme MnmG.